A 205-amino-acid polypeptide reads, in one-letter code: Holliday junction branch migration complex subunit RuvA (205 aa).

The interval 1–64 (MIGKLKGVVD…EDQIRLFGFS (64 aa)) is domain I. Residues 65 to 143 (SAAERDWFRL…GFSASEPLAA (79 aa)) form a domain II region. A flexible linker region spans residues 144–152 (QLGGGGVAS). Residues 153–205 (AQGGAAADAVSALVNLGYGVPQANAAIAAALRGAGEGAKTEVLIRLGLKELAK) are domain III.

The protein belongs to the RuvA family. As to quaternary structure, homotetramer. Forms an RuvA(8)-RuvB(12)-Holliday junction (HJ) complex. HJ DNA is sandwiched between 2 RuvA tetramers; dsDNA enters through RuvA and exits via RuvB. An RuvB hexamer assembles on each DNA strand where it exits the tetramer. Each RuvB hexamer is contacted by two RuvA subunits (via domain III) on 2 adjacent RuvB subunits; this complex drives branch migration. In the full resolvosome a probable DNA-RuvA(4)-RuvB(12)-RuvC(2) complex forms which resolves the HJ.

The protein localises to the cytoplasm. In terms of biological role, the RuvA-RuvB-RuvC complex processes Holliday junction (HJ) DNA during genetic recombination and DNA repair, while the RuvA-RuvB complex plays an important role in the rescue of blocked DNA replication forks via replication fork reversal (RFR). RuvA specifically binds to HJ cruciform DNA, conferring on it an open structure. The RuvB hexamer acts as an ATP-dependent pump, pulling dsDNA into and through the RuvAB complex. HJ branch migration allows RuvC to scan DNA until it finds its consensus sequence, where it cleaves and resolves the cruciform DNA. The chain is Holliday junction branch migration complex subunit RuvA from Xanthobacter autotrophicus (strain ATCC BAA-1158 / Py2).